The chain runs to 813 residues: Hyaluronate lyase HylB (813 aa).

Positions 1-32 form a signal peptide, tat-type signal; it reads MFGTPSRRTFLTASALSAMALAASPTVTDAIA. Catalysis depends on residues Asn222, His272, and Tyr281.

The protein belongs to the polysaccharide lyase 8 family. Predicted to be exported by the Tat system. The position of the signal peptide cleavage has not been experimentally proven.

The protein localises to the secreted. It catalyses the reaction [hyaluronan](n) = n 3-(4-deoxy-beta-D-gluc-4-enuronosyl)-N-acetyl-D-glucosamine + H2O. In terms of biological role, degrades hyaluronic acid (HA) exclusively into HA disaccharides (HA-2). Produced HA-2s confer anti-inflammatory properties leading to reduced immunopathology in the mouse model of acne. The polypeptide is Hyaluronate lyase HylB (Cutibacterium acnes (strain DSM 16379 / KPA171202) (Propionibacterium acnes)).